The chain runs to 660 residues: Bifunctional polymyxin resistance protein ArnA (660 aa).

Residues 1–304 (MKTVVFAYHD…TLGLVQGSRL (304 aa)) are formyltransferase ArnAFT. 86 to 88 (HLI) serves as a coordination point for (6R)-10-formyltetrahydrofolate. H104 functions as the Proton donor; for formyltransferase activity in the catalytic mechanism. (6R)-10-formyltetrahydrofolate is bound by residues R114 and 136-140 (VKRAD). The interval 314–660 (RRTRVLILGV…RTVDLTDKPL (347 aa)) is dehydrogenase ArnADH. Residues D347 and 368–369 (DI) contribute to the NAD(+) site. UDP-alpha-D-glucuronate is bound by residues A393, Y398, and 432–433 (TS). Residue E434 is the Proton acceptor; for decarboxylase activity of the active site. UDP-alpha-D-glucuronate-binding positions include R460, N492, 526–535 (KLIDGGKQKR), and Y613. R619 acts as the Proton donor; for decarboxylase activity in catalysis.

It in the N-terminal section; belongs to the Fmt family. UDP-L-Ara4N formyltransferase subfamily. The protein in the C-terminal section; belongs to the NAD(P)-dependent epimerase/dehydratase family. UDP-glucuronic acid decarboxylase subfamily. As to quaternary structure, homohexamer, formed by a dimer of trimers.

It carries out the reaction UDP-alpha-D-glucuronate + NAD(+) = UDP-beta-L-threo-pentopyranos-4-ulose + CO2 + NADH. The enzyme catalyses UDP-4-amino-4-deoxy-beta-L-arabinose + (6R)-10-formyltetrahydrofolate = UDP-4-deoxy-4-formamido-beta-L-arabinose + (6S)-5,6,7,8-tetrahydrofolate + H(+). The protein operates within nucleotide-sugar biosynthesis; UDP-4-deoxy-4-formamido-beta-L-arabinose biosynthesis; UDP-4-deoxy-4-formamido-beta-L-arabinose from UDP-alpha-D-glucuronate: step 1/3. It participates in nucleotide-sugar biosynthesis; UDP-4-deoxy-4-formamido-beta-L-arabinose biosynthesis; UDP-4-deoxy-4-formamido-beta-L-arabinose from UDP-alpha-D-glucuronate: step 3/3. Its pathway is bacterial outer membrane biogenesis; lipopolysaccharide biosynthesis. Its function is as follows. Bifunctional enzyme that catalyzes the oxidative decarboxylation of UDP-glucuronic acid (UDP-GlcUA) to UDP-4-keto-arabinose (UDP-Ara4O) and the addition of a formyl group to UDP-4-amino-4-deoxy-L-arabinose (UDP-L-Ara4N) to form UDP-L-4-formamido-arabinose (UDP-L-Ara4FN). The modified arabinose is attached to lipid A and is required for resistance to polymyxin and cationic antimicrobial peptides. The chain is Bifunctional polymyxin resistance protein ArnA from Escherichia coli O6:K15:H31 (strain 536 / UPEC).